We begin with the raw amino-acid sequence, 133 residues long: Protein msa (133 aa).

4 consecutive transmembrane segments (helical) span residues 3–23 (YLILSLVANLLVFGVLSAIGL), 27–47 (ILAAMMMILVIPITISGILFF), 55–75 (YIFFNILFIDFYYYIYNVHLM), and 103–123 (FGFDEILFFTLYLLLILIILY).

The protein resides in the cell membrane. Its function is as follows. Accessory element involved in the expression of sarA and several virulence factors. Modulates SarA production and/or function in a strain-dependent manner. Affects the transcription of the accessory gene regulator (agr) and genes encoding virulence factors including alpha toxin (hla) and protein A (spa). The chain is Protein msa (msa) from Staphylococcus aureus (strain bovine RF122 / ET3-1).